We begin with the raw amino-acid sequence, 255 residues long: Segregation and condensation protein A (255 aa).

This sequence belongs to the ScpA family. Component of a cohesin-like complex composed of ScpA, ScpB and the Smc homodimer, in which ScpA and ScpB bind to the head domain of Smc. The presence of the three proteins is required for the association of the complex with DNA.

The protein resides in the cytoplasm. Functionally, participates in chromosomal partition during cell division. May act via the formation of a condensin-like complex containing Smc and ScpB that pull DNA away from mid-cell into both cell halves. The sequence is that of Segregation and condensation protein A from Lactiplantibacillus plantarum (strain ATCC BAA-793 / NCIMB 8826 / WCFS1) (Lactobacillus plantarum).